The chain runs to 383 residues: S-adenosylmethionine synthase (383 aa).

His15 contributes to the ATP binding site. Asp17 provides a ligand contact to Mg(2+). Glu43 serves as a coordination point for K(+). Positions 56 and 99 each coordinate L-methionine. The segment at Gln99–Arg109 is flexible loop. ATP contacts are provided by residues Asp164 to Lys166, Arg230 to Phe231, Asp239, Arg245 to Lys246, Ala262, and Lys266. Asp239 is a binding site for L-methionine. An L-methionine-binding site is contributed by Lys270.

This sequence belongs to the AdoMet synthase family. In terms of assembly, homotetramer; dimer of dimers. It depends on Mg(2+) as a cofactor. Requires K(+) as cofactor.

It is found in the cytoplasm. The enzyme catalyses L-methionine + ATP + H2O = S-adenosyl-L-methionine + phosphate + diphosphate. Its pathway is amino-acid biosynthesis; S-adenosyl-L-methionine biosynthesis; S-adenosyl-L-methionine from L-methionine: step 1/1. Catalyzes the formation of S-adenosylmethionine (AdoMet) from methionine and ATP. The overall synthetic reaction is composed of two sequential steps, AdoMet formation and the subsequent tripolyphosphate hydrolysis which occurs prior to release of AdoMet from the enzyme. This Shewanella loihica (strain ATCC BAA-1088 / PV-4) protein is S-adenosylmethionine synthase.